Here is a 370-residue protein sequence, read N- to C-terminus: Queuine tRNA-ribosyltransferase (370 aa).

The active-site Proton acceptor is Asp-89. Residues 89–93, Asp-143, and Gly-214 each bind substrate; that span reads DSGGF. The segment at 245-251 is RNA binding; sequence GVGKPED. Asp-264 (nucleophile) is an active-site residue. The interval 269–273 is RNA binding; important for wobble base 34 recognition; the sequence is TRNAR. 4 residues coordinate Zn(2+): Cys-302, Cys-304, Cys-307, and His-333.

Belongs to the queuine tRNA-ribosyltransferase family. As to quaternary structure, homodimer. Within each dimer, one monomer is responsible for RNA recognition and catalysis, while the other monomer binds to the replacement base PreQ1. Zn(2+) serves as cofactor.

The catalysed reaction is 7-aminomethyl-7-carbaguanine + guanosine(34) in tRNA = 7-aminomethyl-7-carbaguanosine(34) in tRNA + guanine. Its pathway is tRNA modification; tRNA-queuosine biosynthesis. In terms of biological role, catalyzes the base-exchange of a guanine (G) residue with the queuine precursor 7-aminomethyl-7-deazaguanine (PreQ1) at position 34 (anticodon wobble position) in tRNAs with GU(N) anticodons (tRNA-Asp, -Asn, -His and -Tyr). Catalysis occurs through a double-displacement mechanism. The nucleophile active site attacks the C1' of nucleotide 34 to detach the guanine base from the RNA, forming a covalent enzyme-RNA intermediate. The proton acceptor active site deprotonates the incoming PreQ1, allowing a nucleophilic attack on the C1' of the ribose to form the product. After dissociation, two additional enzymatic reactions on the tRNA convert PreQ1 to queuine (Q), resulting in the hypermodified nucleoside queuosine (7-(((4,5-cis-dihydroxy-2-cyclopenten-1-yl)amino)methyl)-7-deazaguanosine). The chain is Queuine tRNA-ribosyltransferase from Buchnera aphidicola subsp. Acyrthosiphon pisum (strain APS) (Acyrthosiphon pisum symbiotic bacterium).